The following is an 815-amino-acid chain: TBC1 domain family member 5 (815 aa).

S44 carries the post-translational modification Phosphoserine. The interval 56–64 (MKEWEELFV) is required for interaction with retromer; involved in interaction with ATG8 family proteins. The short motif at 57–62 (KEWEEL) is the LIR 1 element. Positions 81–359 (LRSSRFRSIC…VVWDALFADS (279 aa)) constitute a Rab-GAP TBC domain. R448 bears the Asymmetric dimethylarginine; alternate mark. Residue R448 is modified to Omega-N-methylarginine; alternate. A Phosphoserine modification is found at S460. The tract at residues 475–591 (PGSMGGPVPG…SATKKDSFFS (117 aa)) is disordered. 2 stretches are compositionally biased toward low complexity: residues 483 to 492 (PGNNSSSSFS) and 510 to 539 (QQQQ…QQQQ). A phosphoserine mark is found at S546, S563, S565, S568, S578, and S608. Low complexity predominate over residues 556-568 (SSKTISSSPSIES). Disordered regions lie at residues 702 to 733 (SGQD…PDDF) and 754 to 815 (QPLL…PLDI). Polar residues predominate over residues 754 to 765 (QPLLTLRSTSGK). The segment covering 783–796 (PASASASSSNPSSS) has biased composition (low complexity). The LIR 2 motif lies at 805–809 (SGFTI). The required for interaction with ATG8 family proteins stretch occupies residues 806 to 811 (GFTIVS). At S811 the chain carries Phosphoserine.

Interacts with MAP1LC3A, MAP1LC3B, MAP1LC3C, GABARAP, GABARAPL1, GABARAPL2. Interacts with VPS29 and VPS35; indicative for an association with retromer CSC subcomplex. MAP1LC3A and VPS29 compete for binding to TBC1D5. Interacts with AP2M1; indicative for an association with the AP2 complex. Interacts with ULK1 and ATG13 (phosphorylated); indicative for an association with the activated ULK1-ATG13-FIP200 complex. Interacts with ATG9A; the interactions seems to be restricted to the AP2-clathrin-associated fraction of ATG9A.

It localises to the endosome membrane. It is found in the cytoplasmic vesicle. Its subcellular location is the autophagosome. Functionally, may act as a GTPase-activating protein for Rab family protein(s). May act as a GAP for RAB7A. Can displace RAB7A and retromer CSC subcomplex from the endosomal membrane to the cytosol; at least retromer displacement seems to require its catalytic activity. Required for retrograde transport of cargo proteins from endosomes to the trans-Golgi network (TGN); the function seems to require its catalytic activity. Involved in regulation of autophagy. May act as a molecular switch between endosomal and autophagosomal transport and is involved in reprogramming vesicle trafficking upon autophagy induction. Involved in the trafficking of ATG9A upon activation of autophagy. May regulate the recruitment of ATG9A-AP2-containing vesicles to autophagic membranes. The polypeptide is TBC1 domain family member 5 (Tbc1d5) (Mus musculus (Mouse)).